The chain runs to 84 residues: Small ribosomal subunit protein uS15 (84 aa).

This sequence belongs to the universal ribosomal protein uS15 family. Part of the 30S ribosomal subunit. Forms a bridge to the 50S subunit in the 70S ribosome, contacting the 23S rRNA.

In terms of biological role, one of the primary rRNA binding proteins, it binds directly to 16S rRNA where it helps nucleate assembly of the platform of the 30S subunit by binding and bridging several RNA helices of the 16S rRNA. Its function is as follows. Forms an intersubunit bridge (bridge B4) with the 23S rRNA of the 50S subunit in the ribosome. The protein is Small ribosomal subunit protein uS15 of Thermosipho melanesiensis (strain DSM 12029 / CIP 104789 / BI429).